The following is a 551-amino-acid chain: Serine beta-lactamase-like protein LACTB, mitochondrial (551 aa).

The transit peptide at 1–113 (MYRLLSSVTA…RAIESSRDLL (113 aa)) directs the protein to the mitochondrion. The tract at residues 69-101 (PADPEASGTTELSHEQALSPGSPHTPAPPAARG) is disordered. The Acyl-ester intermediate role is filled by Ser-162. The segment at 237–287 (LKMVKGTPPPSDQEKELKEKGGKNNEKSDAPKAKVEQDSEARCRSAKPGKK) is disordered. Residues 248-279 (DQEKELKEKGGKNNEKSDAPKAKVEQDSEARC) show a composition bias toward basic and acidic residues. 2 positions are modified to N6-succinyllysine: Lys-287 and Lys-288. An N6-acetyllysine mark is found at Lys-301 and Lys-346.

The protein belongs to the peptidase S12 family. As to expression, expressed predominantly in liver.

It is found in the mitochondrion. Its function is as follows. Mitochondrial serine protease that acts as a regulator of mitochondrial lipid metabolism. Acts by decreasing protein levels of PISD, a mitochondrial enzyme that converts phosphatidylserine (PtdSer) to phosphatidylethanolamine (PtdEtn), thereby affecting mitochondrial lipid metabolism. It is unclear whether it acts directly by mediating proteolysis of PISD or by mediating proteolysis of another lipid metabolism protein. Acts as a tumor suppressor that has the ability to inhibit proliferation of multiple types of cancer cells: probably by promoting decreased levels of PISD, thereby affecting mitochondrial lipid metabolism. The sequence is that of Serine beta-lactamase-like protein LACTB, mitochondrial from Mus musculus (Mouse).